We begin with the raw amino-acid sequence, 335 residues long: Glycerol-3-phosphate dehydrogenase [NAD(P)+] (335 aa).

NADPH is bound by residues Ser-15, Tyr-16, His-36, and Lys-110. Positions 110, 139, and 141 each coordinate sn-glycerol 3-phosphate. Position 143 (Ala-143) interacts with NADPH. Positions 195, 248, 258, 259, and 260 each coordinate sn-glycerol 3-phosphate. Residue Lys-195 is the Proton acceptor of the active site. Position 259 (Arg-259) interacts with NADPH. NADPH contacts are provided by Val-283 and Glu-285.

This sequence belongs to the NAD-dependent glycerol-3-phosphate dehydrogenase family.

It is found in the cytoplasm. The enzyme catalyses sn-glycerol 3-phosphate + NAD(+) = dihydroxyacetone phosphate + NADH + H(+). It carries out the reaction sn-glycerol 3-phosphate + NADP(+) = dihydroxyacetone phosphate + NADPH + H(+). It functions in the pathway membrane lipid metabolism; glycerophospholipid metabolism. In terms of biological role, catalyzes the reduction of the glycolytic intermediate dihydroxyacetone phosphate (DHAP) to sn-glycerol 3-phosphate (G3P), the key precursor for phospholipid synthesis. The chain is Glycerol-3-phosphate dehydrogenase [NAD(P)+] from Haemophilus influenzae (strain ATCC 51907 / DSM 11121 / KW20 / Rd).